The following is a 783-amino-acid chain: Polyribonucleotide nucleotidyltransferase 1, mitochondrial (783 aa).

Residues 1-45 (MAACRYCCSCLRLRPLSDGPFLLPRRDRALTQLQVRALWSSAGSR) constitute a mitochondrion transit peptide. N6-acetyllysine occurs at positions 250, 264, 285, and 289. N6-succinyllysine is present on lysine 552. Residues 605–664 (PVVETVQVPLSKRAKFVGPGGYNLKKLQAETGVTISQVDEETFSVFAPTPSAMHEARDFI) enclose the KH domain. An S1 motif domain is found at 679–750 (GAVYTATITE…ADGRMRLSRK (72 aa)). Serine 754 and serine 782 each carry phosphoserine.

This sequence belongs to the polyribonucleotide nucleotidyltransferase family. Homotrimer; in free form. Homooligomer. Component of the mitochondrial degradosome (mtEXO) complex which is a heteropentamer containing 2 copies of SUPV3L1 and 3 copies of PNPT1. As part of the mitochondrial degradosome complex, interacts with GRSF1 in an RNA-dependent manner; the interaction enhances the activity of the complex. Interacts with TCL1A; the interaction has no effect on PNPT1 exonuclease activity.

The protein localises to the cytoplasm. It is found in the mitochondrion matrix. It localises to the mitochondrion intermembrane space. The enzyme catalyses RNA(n+1) + phosphate = RNA(n) + a ribonucleoside 5'-diphosphate. In terms of biological role, RNA-binding protein implicated in numerous RNA metabolic processes. Catalyzes the phosphorolysis of single-stranded polyribonucleotides processively in the 3'-to-5' direction. Mitochondrial intermembrane factor with RNA-processing exoribonulease activity. Component of the mitochondrial degradosome (mtEXO) complex, that degrades 3' overhang double-stranded RNA with a 3'-to-5' directionality in an ATP-dependent manner. Involved in the degradation of non-coding mitochondrial transcripts (MT-ncRNA) and tRNA-like molecules. Required for correct processing and polyadenylation of mitochondrial mRNAs. Plays a role as a cytoplasmic RNA import factor that mediates the translocation of small RNA components, like the 5S RNA, the RNA subunit of ribonuclease P and the mitochondrial RNA-processing (MRP) RNA, into the mitochondrial matrix. Plays a role in mitochondrial morphogenesis and respiration; regulates the expression of the electron transport chain (ETC) components at the mRNA and protein levels. In the cytoplasm, shows a 3'-to-5' exoribonuclease mediating mRNA degradation activity; degrades c-myc mRNA upon treatment with IFNB1/IFN-beta, resulting in a growth arrest in melanoma cells. Regulates the stability of specific mature miRNAs in melanoma cells; specifically and selectively degrades miR-221, preferentially. Also plays a role in RNA cell surveillance by cleaning up oxidized RNAs. Binds to the RNA subunit of ribonuclease P, MRP RNA and miR-221 microRNA. This chain is Polyribonucleotide nucleotidyltransferase 1, mitochondrial, found in Homo sapiens (Human).